The chain runs to 226 residues: Enolase-phosphatase E1 (226 aa).

This sequence belongs to the HAD-like hydrolase superfamily. MasA/MtnC family. Monomer. Mg(2+) is required as a cofactor.

It carries out the reaction 5-methylsulfanyl-2,3-dioxopentyl phosphate + H2O = 1,2-dihydroxy-5-(methylsulfanyl)pent-1-en-3-one + phosphate. It participates in amino-acid biosynthesis; L-methionine biosynthesis via salvage pathway; L-methionine from S-methyl-5-thio-alpha-D-ribose 1-phosphate: step 3/6. The protein operates within amino-acid biosynthesis; L-methionine biosynthesis via salvage pathway; L-methionine from S-methyl-5-thio-alpha-D-ribose 1-phosphate: step 4/6. Functionally, bifunctional enzyme that catalyzes the enolization of 2,3-diketo-5-methylthiopentyl-1-phosphate (DK-MTP-1-P) into the intermediate 2-hydroxy-3-keto-5-methylthiopentenyl-1-phosphate (HK-MTPenyl-1-P), which is then dephosphorylated to form the acireductone 1,2-dihydroxy-3-keto-5-methylthiopentene (DHK-MTPene). In Shewanella putrefaciens (strain CN-32 / ATCC BAA-453), this protein is Enolase-phosphatase E1.